Consider the following 269-residue polypeptide: Shikimate dehydrogenase (NADP(+)) (269 aa).

Shikimate-binding positions include serine 15 to serine 17 and threonine 62. Lysine 66 acts as the Proton acceptor in catalysis. Shikimate-binding residues include asparagine 86 and aspartate 100. Residues glycine 124–alanine 128, asparagine 147–arginine 152, and isoleucine 211 contribute to the NADP(+) site. Tyrosine 213 lines the shikimate pocket. Residue glycine 234 coordinates NADP(+).

The protein belongs to the shikimate dehydrogenase family. Homodimer.

It carries out the reaction shikimate + NADP(+) = 3-dehydroshikimate + NADPH + H(+). Its pathway is metabolic intermediate biosynthesis; chorismate biosynthesis; chorismate from D-erythrose 4-phosphate and phosphoenolpyruvate: step 4/7. Involved in the biosynthesis of the chorismate, which leads to the biosynthesis of aromatic amino acids. Catalyzes the reversible NADPH linked reduction of 3-dehydroshikimate (DHSA) to yield shikimate (SA). This Methanococcoides burtonii (strain DSM 6242 / NBRC 107633 / OCM 468 / ACE-M) protein is Shikimate dehydrogenase (NADP(+)).